Here is a 350-residue protein sequence, read N- to C-terminus: S-adenosylmethionine:tRNA ribosyltransferase-isomerase (350 aa).

It belongs to the QueA family. In terms of assembly, monomer.

It localises to the cytoplasm. It catalyses the reaction 7-aminomethyl-7-carbaguanosine(34) in tRNA + S-adenosyl-L-methionine = epoxyqueuosine(34) in tRNA + adenine + L-methionine + 2 H(+). It participates in tRNA modification; tRNA-queuosine biosynthesis. Its function is as follows. Transfers and isomerizes the ribose moiety from AdoMet to the 7-aminomethyl group of 7-deazaguanine (preQ1-tRNA) to give epoxyqueuosine (oQ-tRNA). In Saccharophagus degradans (strain 2-40 / ATCC 43961 / DSM 17024), this protein is S-adenosylmethionine:tRNA ribosyltransferase-isomerase.